A 428-amino-acid polypeptide reads, in one-letter code: Serine--tRNA ligase (428 aa).

235–237 (TAE) is an L-serine binding site. 266-268 (RSE) contributes to the ATP binding site. Glu-289 is an L-serine binding site. 353-356 (EISS) provides a ligand contact to ATP. L-serine is bound at residue Ser-389.

Belongs to the class-II aminoacyl-tRNA synthetase family. Type-1 seryl-tRNA synthetase subfamily. In terms of assembly, homodimer. The tRNA molecule binds across the dimer.

The protein localises to the cytoplasm. The enzyme catalyses tRNA(Ser) + L-serine + ATP = L-seryl-tRNA(Ser) + AMP + diphosphate + H(+). It carries out the reaction tRNA(Sec) + L-serine + ATP = L-seryl-tRNA(Sec) + AMP + diphosphate + H(+). It participates in aminoacyl-tRNA biosynthesis; selenocysteinyl-tRNA(Sec) biosynthesis; L-seryl-tRNA(Sec) from L-serine and tRNA(Sec): step 1/1. Catalyzes the attachment of serine to tRNA(Ser). Is also able to aminoacylate tRNA(Sec) with serine, to form the misacylated tRNA L-seryl-tRNA(Sec), which will be further converted into selenocysteinyl-tRNA(Sec). This is Serine--tRNA ligase from Shewanella frigidimarina (strain NCIMB 400).